Reading from the N-terminus, the 256-residue chain is 5'-nucleotidase SurE (256 aa).

Residues D8, D9, S40, and N92 each coordinate a divalent metal cation.

Belongs to the SurE nucleotidase family. A divalent metal cation is required as a cofactor.

Its subcellular location is the cytoplasm. The catalysed reaction is a ribonucleoside 5'-phosphate + H2O = a ribonucleoside + phosphate. Its function is as follows. Nucleotidase that shows phosphatase activity on nucleoside 5'-monophosphates. The polypeptide is 5'-nucleotidase SurE (Sinorhizobium fredii (strain NBRC 101917 / NGR234)).